The sequence spans 26 residues: Hemocyanin subunit B (26 aa).

This sequence belongs to the tyrosinase family. Hemocyanin subfamily. Hemolymph.

Its subcellular location is the secreted. It is found in the extracellular space. In terms of biological role, hemocyanins are copper-containing oxygen carriers occurring freely dissolved in the hemolymph of many mollusks and arthropods. The chain is Hemocyanin subunit B from Carcinus maenas (Common shore crab).